Consider the following 417-residue polypeptide: BSD domain-containing protein 1-B (417 aa).

One can recognise a BSD domain in the interval tryptophan 153–glutamate 205. Disordered regions lie at residues lysine 215–glutamate 234, histidine 262–proline 292, and alanine 323–methionine 390. A compositionally biased stretch (basic and acidic residues) spans histidine 262 to threonine 278. The span at threonine 281–proline 292 shows a compositional bias: low complexity. Positions proline 332 to methionine 343 are enriched in polar residues. Positions threonine 345–valine 356 are enriched in basic and acidic residues. Polar residues predominate over residues asparagine 360–aspartate 379. A compositionally biased stretch (acidic residues) spans valine 380–methionine 390.

The chain is BSD domain-containing protein 1-B (bsdc1-b) from Xenopus laevis (African clawed frog).